A 305-amino-acid polypeptide reads, in one-letter code: UDP-3-O-acyl-N-acetylglucosamine deacetylase (305 aa).

Positions 79, 238, and 242 each coordinate Zn(2+). His-265 acts as the Proton donor in catalysis.

It belongs to the LpxC family. The cofactor is Zn(2+).

It catalyses the reaction a UDP-3-O-[(3R)-3-hydroxyacyl]-N-acetyl-alpha-D-glucosamine + H2O = a UDP-3-O-[(3R)-3-hydroxyacyl]-alpha-D-glucosamine + acetate. Its pathway is glycolipid biosynthesis; lipid IV(A) biosynthesis; lipid IV(A) from (3R)-3-hydroxytetradecanoyl-[acyl-carrier-protein] and UDP-N-acetyl-alpha-D-glucosamine: step 2/6. Its function is as follows. Catalyzes the hydrolysis of UDP-3-O-myristoyl-N-acetylglucosamine to form UDP-3-O-myristoylglucosamine and acetate, the committed step in lipid A biosynthesis. The polypeptide is UDP-3-O-acyl-N-acetylglucosamine deacetylase (Sodalis glossinidius (strain morsitans)).